Reading from the N-terminus, the 289-residue chain is Syntaxin-3 (289 aa).

Residues 1-263 lie on the Cytoplasmic side of the membrane; the sequence is MKDRLEQLKA…MKYQGQARKK (263 aa). A coiled-coil region spans residues 32-111; it reads MDEFFSEIEE…IEEDEVRSSA (80 aa). The 63-residue stretch at 191–253 folds into the t-SNARE coiled-coil homology domain; that stretch reads LSEIEGRHKD…EKARDETKRA (63 aa). The helical; Anchor for type IV membrane protein transmembrane segment at 264–284 threads the bilayer; it reads LIIIIVIVVVLLGILALIIGL. Residues 285-289 lie on the Extracellular side of the membrane; it reads SVGLK.

Belongs to the syntaxin family. As to quaternary structure, interacts with REEP6. Interacts with PRPH2 in rod and cone photoreceptors. Interacts with ROM1. Interacts with SNAP25. Interacts with VAMP2. As to expression, heart, spleen, lung and kidney.

It is found in the membrane. Potentially involved in docking of synaptic vesicles at presynaptic active zones. Apical receptor involved in membrane fusion of apical vesicles. Essential for survival of retinal photoreceetors. This Rattus norvegicus (Rat) protein is Syntaxin-3 (Stx3).